A 126-amino-acid chain; its full sequence is Small ribosomal subunit protein uS11 (126 aa).

This sequence belongs to the universal ribosomal protein uS11 family. In terms of assembly, part of the 30S ribosomal subunit. Interacts with proteins S7 and S18. Binds to IF-3.

Functionally, located on the platform of the 30S subunit, it bridges several disparate RNA helices of the 16S rRNA. Forms part of the Shine-Dalgarno cleft in the 70S ribosome. The chain is Small ribosomal subunit protein uS11 from Desulfotalea psychrophila (strain LSv54 / DSM 12343).